The sequence spans 720 residues: DNA helicase II (720 aa).

Residues 8-286 enclose the UvrD-like helicase ATP-binding domain; that stretch reads DSLNDKQREA…IRLEQNYRST (279 aa). Residues 32–37 and Arg284 each bind ATP; that span reads GSGKTR. Residues 287-564 enclose the UvrD-like helicase C-terminal domain; the sequence is SNILSAANAL…QLMTLHSAKG (278 aa).

This sequence belongs to the helicase family. UvrD subfamily.

The enzyme catalyses Couples ATP hydrolysis with the unwinding of duplex DNA by translocating in the 3'-5' direction.. It carries out the reaction ATP + H2O = ADP + phosphate + H(+). In terms of biological role, a helicase with DNA-dependent ATPase activity. Unwinds DNA duplexes with 3'-5' polarity. Translocates on single-stranded DNA with 3'-5' polarity. Initiates unwinding more efficiently from a nicked substrate than double-stranded DNA. Involved in the post-incision events of nucleotide excision repair and methyl-directed mismatch repair, and probably also in repair of alkylated DNA. The sequence is that of DNA helicase II from Escherichia coli (strain K12).